A 154-amino-acid polypeptide reads, in one-letter code: Large-conductance mechanosensitive channel (154 aa).

Helical transmembrane passes span 14–34 (VMDL…VTSL), 38–58 (IITP…LFIN), and 81–101 (GLFL…FIVI).

Belongs to the MscL family. Homopentamer.

It is found in the cell membrane. In terms of biological role, channel that opens in response to stretch forces in the membrane lipid bilayer. May participate in the regulation of osmotic pressure changes within the cell. The sequence is that of Large-conductance mechanosensitive channel from Brevibacillus brevis (strain 47 / JCM 6285 / NBRC 100599).